We begin with the raw amino-acid sequence, 467 residues long: Cytochrome P450 monooxygenase azaI (467 aa).

A signal peptide spans 1–28 (MESLAQLPGIFLPLAGCVLALSLSALLA). Cys411 lines the heme pocket.

This sequence belongs to the cytochrome P450 family. Heme serves as cofactor.

Its pathway is secondary metabolite biosynthesis. Its function is as follows. Cytochrome P450 monooxygenase; part of the gene cluster that mediates the biosynthesis of azaphilones, a class of fungal metabolites characterized by a highly oxygenated pyrano-quinone bicyclic core and exhibiting a broad range of bioactivities. In the first step, the non-reducing polyketide synthase azaA forms the hexaketide precursor from successive condensations of five malonyl-CoA units, presumably with a simple acetyl-CoA starter unit. The reactive polyketide chain then undergoes a PT-mediated C2-C7 cyclization to afford the aromatic ring and is eventually released as an aldehyde through the R-domain. The putative ketoreductase azaE is proposed to catalyze the reduction of the terminal ketone resulting in the early culture product FK17-P2a. The monooxygenase azaH was demonstrated to be the only enzyme required to convert FK17-P2a to azanigerone E. AzaH first hydroxylates the benzaldehyde intermediate FK17-P2a at C4, which triggers the formation of the pyran-ring to afford azanigerone E. In parallel, the 2,4-dimethylhexanoyl chain is synthesized by the HR-PKS azaB and is proposed to be transferred to the C4-hydroxyl of azanigerone E by the acyltransferase azaD directly from the ACP domain of azaB. Alternatively, the 2,4-dimethyl-hexanoyl chain may be offloaded from the HR-PKS as a carboxylic acid and converted to an acyl-CoA by azaF. The resulting acyl-CoA molecule could then be taken up as a substrate by AzaD to form azanigerone B. To yield the carboxylic acid substituent in azanigerone A, the hydroxypropyl side chain of azanigerone B would need to undergo a C-C oxidative cleavage catalyzed by cytochrome P450 AzaI. AzaI is proposed to act on a vicinal diol that leads to a C-C bond scission either through an alkoxyradical intermediate or a peroxy complex. In the biosynthesis of azanigerone A, azanigerone B first undergoes hydroxylation at C10, possibly catalyzed by one of the two FAD-dependent monooxygenases encoded in the cluster, azaG or azaL, resulting in the vicinal diol azanigerone C. Oxidative cleavage of azanigerone C by azaI would yield the corresponding aldehyde derivative of azanigerone A. Finally, the dehydrogenase azaJ is proposed to convert the aldehyde functional group into the carboxylic acid, completing the conversion from azanigerone B to azanigerone A. Alternatively, the oxidation of aldehyde to carboxylic acid may be catalyzed by the same P450 enzyme azaI via consecutive oxidation or by endogenous alcohol dehydrogenase. This Aspergillus niger (strain ATCC 1015 / CBS 113.46 / FGSC A1144 / LSHB Ac4 / NCTC 3858a / NRRL 328 / USDA 3528.7) protein is Cytochrome P450 monooxygenase azaI.